A 435-amino-acid chain; its full sequence is Aspartate aminotransferase (435 aa).

Residues Tyr-69 and 100–101 (SL) each bind pyridoxal 5'-phosphate. 139 to 141 (YDR) serves as a coordination point for substrate. Pyridoxal 5'-phosphate-binding positions include Asn-189, Tyr-221, and 254–256 (STS). Position 392 (Arg-392) interacts with substrate.

This sequence belongs to the class-I pyridoxal-phosphate-dependent aminotransferase family. Pyridoxal 5'-phosphate serves as cofactor.

The catalysed reaction is L-aspartate + 2-oxoglutarate = oxaloacetate + L-glutamate. In terms of biological role, main aspartate aminotransferase that couples nitrogen assimilation to aspartate synthesis. Has a weak, but significant, side activity toward kynurenine (Kyn). Oxaloacetate and 2-oxoglutarate, but not pyruvate, serve as amino acceptors, while Asp, Glu and Kyn serve as the best amino donors. Essential for axenic growth and survival of M.tuberculosis in macrophages and in mice. This is Aspartate aminotransferase from Mycobacterium tuberculosis (strain ATCC 25618 / H37Rv).